The primary structure comprises 349 residues: Tribbles homolog 3 (349 aa).

The segment at 1–122 is interaction with DDIT3/CHOP; that stretch reads MRATSLAASA…QHVARPTEVL (122 aa). Residues 35-57 form a disordered region; sequence VRDEPEPGPTPSLPPASDLSPAV. The Protein kinase domain maps to 63-310; sequence LGPYILLERE…ALGILLHPWL (248 aa). A disordered region spans residues 317–349; it reads VSPPRSDRREMDQVVPDGPQLEEAEEGEVGLYG. The segment covering 336–349 has biased composition (acidic residues); that stretch reads QLEEAEEGEVGLYG.

Belongs to the protein kinase superfamily. CAMK Ser/Thr protein kinase family. Tribbles subfamily. As to quaternary structure, interacts with AKT1, AKT2, MAP2K1 and MAP2K7. Interacts with ATF4. Interacts with DDIT3/CHOP and inhibits its interaction with EP300/P300. Interacts with APOBEC3C. Interacts (via N-terminus) with APOBEC3A. Interacts with RELA. In terms of tissue distribution, detected only in the lung. Not detected in the heart, brain, spleen, liver, skeletal muscle, kidney and testis.

The protein resides in the nucleus. Inactive protein kinase which acts as a regulator of the integrated stress response (ISR), a process for adaptation to various stress. Inhibits the transcriptional activity of DDIT3/CHOP and is involved in DDIT3/CHOP-dependent cell death during ER stress. May play a role in programmed neuronal cell death but does not appear to affect non-neuronal cells. Acts as a negative feedback regulator of the ATF4-dependent transcription during the ISR: while TRIB3 expression is promoted by ATF4, TRIB3 protein interacts with ATF4 and inhibits ATF4 transcription activity. Disrupts insulin signaling by binding directly to Akt kinases and blocking their activation. May bind directly to and mask the 'Thr-308' phosphorylation site in AKT1. Interacts with the NF-kappa-B transactivator p65 RELA and inhibits its phosphorylation and thus its transcriptional activation activity. Interacts with MAPK kinases and regulates activation of MAP kinases. Can inhibit APOBEC3A editing of nuclear DNA. The protein is Tribbles homolog 3 (Trib3) of Rattus norvegicus (Rat).